The following is a 163-amino-acid chain: Transcriptional repressor NrdR (163 aa).

A zinc finger lies at 3–34; sequence CVQCGHLEDKVIDSRMSKDGTTIRRRRVCLRC. One can recognise an ATP-cone domain in the interval 49 to 139; it reads LRVVKRDNLR…VYRQFSNVEE (91 aa).

The protein belongs to the NrdR family. It depends on Zn(2+) as a cofactor.

Functionally, negatively regulates transcription of bacterial ribonucleotide reductase nrd genes and operons by binding to NrdR-boxes. This is Transcriptional repressor NrdR from Akkermansia muciniphila (strain ATCC BAA-835 / DSM 22959 / JCM 33894 / BCRC 81048 / CCUG 64013 / CIP 107961 / Muc).